Reading from the N-terminus, the 237-residue chain is Nodulation protein NolA (237 aa).

The region spanning 10 to 79 (RWRIGELAEA…LVEIRKAMEG (70 aa)) is the HTH merR-type domain. Positions 13 to 32 (IGELAEATGVTVRTLHHYEH) form a DNA-binding region, H-T-H motif.

Its function is as follows. Involved in genotype-specific nodulation of soybeans. In Bradyrhizobium diazoefficiens (strain JCM 10833 / BCRC 13528 / IAM 13628 / NBRC 14792 / USDA 110), this protein is Nodulation protein NolA (nolA).